Here is a 161-residue protein sequence, read N- to C-terminus: Cyclic pyranopterin monophosphate synthase (161 aa).

Substrate is bound by residues 75 to 77 and 114 to 115; these read MCH and ME. D129 is a catalytic residue.

This sequence belongs to the MoaC family. Homohexamer; trimer of dimers.

It catalyses the reaction (8S)-3',8-cyclo-7,8-dihydroguanosine 5'-triphosphate = cyclic pyranopterin phosphate + diphosphate. Its pathway is cofactor biosynthesis; molybdopterin biosynthesis. Catalyzes the conversion of (8S)-3',8-cyclo-7,8-dihydroguanosine 5'-triphosphate to cyclic pyranopterin monophosphate (cPMP). The chain is Cyclic pyranopterin monophosphate synthase from Staphylococcus carnosus (strain TM300).